We begin with the raw amino-acid sequence, 307 residues long: tRNA pseudouridine synthase B (307 aa).

Asp38 functions as the Nucleophile in the catalytic mechanism.

The protein belongs to the pseudouridine synthase TruB family. Type 1 subfamily.

The enzyme catalyses uridine(55) in tRNA = pseudouridine(55) in tRNA. Its function is as follows. Responsible for synthesis of pseudouridine from uracil-55 in the psi GC loop of transfer RNAs. The polypeptide is tRNA pseudouridine synthase B (Bacillus cytotoxicus (strain DSM 22905 / CIP 110041 / 391-98 / NVH 391-98)).